A 138-amino-acid polypeptide reads, in one-letter code: Small ribosomal subunit protein uS11c (138 aa).

The disordered stretch occupies residues 1–23 (MKKPIPRIGSRRNGRIGSRKNGR).

It belongs to the universal ribosomal protein uS11 family. As to quaternary structure, part of the 30S ribosomal subunit.

The protein resides in the plastid. It localises to the chloroplast. The polypeptide is Small ribosomal subunit protein uS11c (Amborella trichopoda).